Consider the following 152-residue polypeptide: UPF0178 protein swp_1285 (152 aa).

Belongs to the UPF0178 family.

This is UPF0178 protein swp_1285 from Shewanella piezotolerans (strain WP3 / JCM 13877).